Here is a 99-residue protein sequence, read N- to C-terminus: Pyruvate synthase subunit PorD (99 aa).

4Fe-4S ferredoxin-type domains are found at residues 32–60 (MRPI…IQEG) and 61–91 (GIMK…MRPE). [4Fe-4S] cluster-binding residues include cysteine 41, cysteine 44, cysteine 47, cysteine 51, cysteine 71, cysteine 74, cysteine 77, and cysteine 81.

In terms of assembly, heterotetramer of one alpha, one beta, one delta and one gamma chain. It depends on [4Fe-4S] cluster as a cofactor.

This is Pyruvate synthase subunit PorD (porD) from Thermotoga maritima (strain ATCC 43589 / DSM 3109 / JCM 10099 / NBRC 100826 / MSB8).